A 1293-amino-acid polypeptide reads, in one-letter code: DNA-directed RNA polymerase subunit beta' (1293 aa).

Positions 60, 62, 75, and 78 each coordinate Zn(2+). The Mg(2+) site is built by D535, D537, and D539. Residues C877, C953, C960, and C963 each contribute to the Zn(2+) site.

It belongs to the RNA polymerase beta' chain family. The RNAP catalytic core consists of 2 alpha, 1 beta, 1 beta' and 1 omega subunit. When a sigma factor is associated with the core the holoenzyme is formed, which can initiate transcription. Requires Mg(2+) as cofactor. It depends on Zn(2+) as a cofactor.

It catalyses the reaction RNA(n) + a ribonucleoside 5'-triphosphate = RNA(n+1) + diphosphate. In terms of biological role, DNA-dependent RNA polymerase catalyzes the transcription of DNA into RNA using the four ribonucleoside triphosphates as substrates. This chain is DNA-directed RNA polymerase subunit beta', found in Kineococcus radiotolerans (strain ATCC BAA-149 / DSM 14245 / SRS30216).